The following is an 83-amino-acid chain: MNFSFSSYPYYNMIKHIANMKRFSLWFTHITFIGLFLMFQLIKDYFSSEGQALINTIFVVTCIIAILLWIIYCVFLKLRNKSH.

A run of 2 helical transmembrane segments spans residues 23–43 (FSLW…QLIK) and 56–76 (TIFV…CVFL).

The protein localises to the cell membrane. This is an uncharacterized protein from Bacillus subtilis (strain 168).